Reading from the N-terminus, the 44-residue chain is Defensin-like protein 1 (44 aa).

The residue at position 1 (Gln-1) is a Pyrrolidone carboxylic acid. A disulfide bridge connects residues Cys-15 and Cys-36.

It belongs to the DEFL family. As to quaternary structure, forms oligomers in its native state.

It localises to the secreted. Its function is as follows. Possesses antifungal activity sensitive to inorganic cations. This Brassica napus (Rape) protein is Defensin-like protein 1 (AFP1).